We begin with the raw amino-acid sequence, 618 residues long: Glucose starvation modulator protein 1 (618 aa).

The segment at residues 20–48 is a DNA-binding region (zn(2)-C6 fungal-type); sequence CEFCHTKHIQCDVGRPCQNCLKRNIGKFC. Residues 325–352 form a disordered region; the sequence is ANANTHPSHNAKLESECDSSSHSDADLE. Positions 335-352 are enriched in basic and acidic residues; the sequence is AKLESECDSSSHSDADLE. The PAS domain maps to 466-538; that stretch reads LLDLENMAKL…QIFNELLAFG (73 aa).

This sequence belongs to the ERT1/acuK family.

Its subcellular location is the nucleus. Its function is as follows. Transcription factor which regulates nonfermentable carbon utilization. Binds specifically to 5'-CGGN(8)CGG-3' and 5'-CGGN(9)CGG-3' sequences in the promoter region. This is Glucose starvation modulator protein 1 (GSM1) from Saccharomyces cerevisiae (strain RM11-1a) (Baker's yeast).